A 460-amino-acid chain; its full sequence is Hemopexin (460 aa).

Residues 1-23 (MARTVVALNILVLLGLCWSLAVA) form the signal peptide. N-linked (GlcNAc...) asparagine glycans are attached at residues Asn-38 and Asn-64. Cystine bridges form between Cys-50–Cys-230, Cys-148–Cys-153, and Cys-187–Cys-199. Hemopexin repeat units lie at residues 53–93 (AWSF…WKNP), 94–138 (VTSV…FPGI), 139–183 (PYPP…SWPA), and 184–230 (VGNC…FISC). His-79 is a binding site for heme. His-149 is a heme binding site. An N-linked (GlcNAc...) asparagine glycan is attached at Asn-186. His-235 contacts heme. Asn-240 and Asn-246 each carry an N-linked (GlcNAc...) asparagine glycan. Intrachain disulfides connect Cys-255–Cys-458, Cys-364–Cys-406, and Cys-416–Cys-433. Hemopexin repeat units lie at residues 257–302 (ADPG…WPQG), 303–350 (PSAV…LGSP), 355–394 (LDTIDAAFSCPGSSKLYVTSGRRLWWLDLKSGAQATWAEL), and 398–448 (HEKV…SLPQ). Heme is bound at residue His-291.

It belongs to the hemopexin family. As to expression, expressed by the liver and secreted in plasma.

Its subcellular location is the secreted. In terms of biological role, binds heme and transports it to the liver for breakdown and iron recovery, after which the free hemopexin returns to the circulation. The chain is Hemopexin (Hpx) from Rattus norvegicus (Rat).